The following is a 319-amino-acid chain: Annexin A4 (319 aa).

An N-acetylalanine modification is found at Ala-2. Residue Thr-7 is modified to Phosphothreonine. Ser-12 is subject to Phosphoserine. Annexin repeat units lie at residues Phe-14–Thr-85, Pro-86–Ala-157, Ala-169–Lys-241, and Asn-245–Gly-316. An N6-acetyllysine mark is found at Lys-213, Lys-293, and Lys-300.

The protein belongs to the annexin family. Expressed in pancreas (at protein level). Also detected in liver, spleen, intestine, stomach, kidney, and adrenal glands.

The protein resides in the zymogen granule membrane. In terms of biological role, calcium/phospholipid-binding protein which promotes membrane fusion and is involved in exocytosis. The polypeptide is Annexin A4 (ANXA4) (Canis lupus familiaris (Dog)).